A 456-amino-acid polypeptide reads, in one-letter code: RuvB-like 1 (456 aa).

70–77 (GPPGTGKT) serves as a coordination point for ATP.

The protein belongs to the RuvB family. Forms homohexameric rings. Can form a dodecamer with ruvbl2 made of two stacked hexameric rings. Is a component of the RNA polymerase II holoenzyme complex. Component of the chromatin-remodeling Ino80 complex. Component of some MLL1/MLL complex.

The protein resides in the nucleus. The protein localises to the dynein axonemal particle. It carries out the reaction ATP + H2O = ADP + phosphate + H(+). Its function is as follows. Has single-stranded DNA-stimulated ATPase and ATP-dependent DNA helicase (3' to 5') activity suggesting a role in nuclear processes such as recombination and transcription. Proposed core component of the chromatin remodeling INO80 complex which exhibits DNA- and nucleosome-activated ATPase activity and catalyzes ATP-dependent nucleosome sliding. This Xenopus laevis (African clawed frog) protein is RuvB-like 1 (ruvbl1).